The sequence spans 135 residues: C-type Lectin CRL (135 aa).

4 disulfides stabilise this stretch: cysteine 3–cysteine 14, cysteine 31–cysteine 131, cysteine 38–cysteine 133, and cysteine 106–cysteine 123. Residues 10 to 132 form the C-type lectin domain; it reads MNGLCYKIFN…CESKDAFLCQ (123 aa). Positions 96, 98, 104, 119, and 120 each coordinate Ca(2+). Residues 96 to 98 carry the Galactose-binding motif; sequence QPD.

This sequence belongs to the true venom lectin family. As to quaternary structure, homodimer; disulfide-linked. Expressed by the venom gland.

The protein localises to the secreted. Its function is as follows. Beta-galactoside and N-acetylgalactosamine (GalNAc) specific C-type lectin. The protein is C-type Lectin CRL of Crotalus ruber ruber (Red diamond rattlesnake).